Consider the following 231-residue polypeptide: Casein kinase II subunit beta (231 aa).

Belongs to the casein kinase 2 subunit beta family. As to quaternary structure, tetramer composed of two alpha chains, one beta chain and one beta' chain. In terms of processing, phosphorylated by alpha subunit.

Regulatory subunit of casein kinase II/CK2. As part of the kinase complex regulates the basal catalytic activity of the alpha subunit a constitutively active serine/threonine-protein kinase that phosphorylates a large number of substrates containing acidic residues C-terminal to the phosphorylated serine or threonine. This chain is Casein kinase II subunit beta, found in Schizosaccharomyces pombe (strain 972 / ATCC 24843) (Fission yeast).